Consider the following 279-residue polypeptide: Ribosomal RNA small subunit methyltransferase J (279 aa).

S-adenosyl-L-methionine contacts are provided by residues 138-139 (ER) and Asp-194.

It belongs to the methyltransferase superfamily. RsmJ family.

The protein localises to the cytoplasm. It catalyses the reaction guanosine(1516) in 16S rRNA + S-adenosyl-L-methionine = N(2)-methylguanosine(1516) in 16S rRNA + S-adenosyl-L-homocysteine + H(+). Specifically methylates the guanosine in position 1516 of 16S rRNA. The polypeptide is Ribosomal RNA small subunit methyltransferase J (Acinetobacter baumannii (strain AYE)).